Consider the following 641-residue polypeptide: Serine/threonine-protein kinase PK-1 (641 aa).

Residues 18 to 280 (YRVDARIAVG…ARARDARARL (263 aa)) enclose the Protein kinase domain. ATP is bound by residues 24-32 (IAVGGMATV) and K47. The active-site Proton acceptor is the D141. The disordered stretch occupies residues 317 to 347 (LPVNEEDEGADAAHRTSRFRSPPPLPPRGRT). 4 consecutive PASTA domains span residues 375–441 (SGQF…TLSK), 442–508 (GPRT…LTVS), 509–576 (KGAP…TLSK), and 577–641 (GPEM…IEIR). The segment at 469 to 494 (KPGMSTREFSDSVPAGSVISTEPGKG) is disordered.

It belongs to the protein kinase superfamily. Ser/Thr protein kinase family. In terms of processing, autophosphorylated on threonine residue(s).

It catalyses the reaction L-seryl-[protein] + ATP = O-phospho-L-seryl-[protein] + ADP + H(+). The catalysed reaction is L-threonyl-[protein] + ATP = O-phospho-L-threonyl-[protein] + ADP + H(+). The polypeptide is Serine/threonine-protein kinase PK-1 (spk1) (Streptomyces toyocaensis).